We begin with the raw amino-acid sequence, 1466 residues long: ABC transporter C family member 6 (1466 aa).

Helical transmembrane passes span 16–36 (SVLS…SWLF), 63–83 (LVLI…LLSC), 91–111 (WPFL…VYLF), 128–148 (VWWV…FVLY), 158–178 (FVIS…SCLW), 286–306 (IVLS…APYL), 322–339 (NQGY…LVEC), 400–420 (WFMH…WILY), 425–445 (LGSI…YPFA), and 512–532 (SVLW…CLLL). In terms of domain architecture, ABC transmembrane type-1 1 spans 286 to 567 (IVLSALLAFV…LPETISMIVQ (282 aa)). An ABC transporter 1 domain is found at 601–824 (VEISNGTFSW…GTDFMELVGA (224 aa)). 636–643 (GTVGSGKS) contacts ATP. Positions 840–876 (ASEKSTTDKENEVLHHKEKQENGSDNKPSGQLVQEEE) are disordered. Residues 844–863 (STTDKENEVLHHKEKQENGS) are compositionally biased toward basic and acidic residues. Helical transmembrane passes span 890–910 (YMAL…QVLF), 937–957 (GFTL…CILI), and 1026–1046 (ILGI…VFIP). Residues 900-1182 (IPLILVVQVL…LIWTLCDLEN (283 aa)) enclose the ABC transmembrane type-1 2 domain. The ABC transporter 2 domain maps to 1219–1453 (ITICNLQVRY…RSSLFSKLVA (235 aa)). Residue 1253–1260 (GRTGCGKS) participates in ATP binding.

The protein belongs to the ABC transporter superfamily. ABCC family. Conjugate transporter (TC 3.A.1.208) subfamily. As to expression, ubiquitous.

It localises to the membrane. It carries out the reaction ATP + H2O + xenobioticSide 1 = ADP + phosphate + xenobioticSide 2.. Functionally, pump for glutathione S-conjugates. This Arabidopsis thaliana (Mouse-ear cress) protein is ABC transporter C family member 6 (ABCC6).